The chain runs to 348 residues: Protein RecA (348 aa).

65–72 (GPESSGKT) contributes to the ATP binding site.

The protein belongs to the RecA family.

Its subcellular location is the cytoplasm. In terms of biological role, can catalyze the hydrolysis of ATP in the presence of single-stranded DNA, the ATP-dependent uptake of single-stranded DNA by duplex DNA, and the ATP-dependent hybridization of homologous single-stranded DNAs. It interacts with LexA causing its activation and leading to its autocatalytic cleavage. The protein is Protein RecA of Vibrio anguillarum (Listonella anguillarum).